The following is a 149-amino-acid chain: Calmodulin (149 aa).

N-acetylalanine is present on alanine 2. EF-hand domains are found at residues glutamate 8–asparagine 43, proline 44–aspartate 79, aspartate 81–lysine 116, and leucine 117–lysine 149. Aspartate 21, aspartate 23, aspartate 25, cysteine 27, glutamate 32, aspartate 57, aspartate 59, asparagine 61, threonine 63, glutamate 68, aspartate 94, aspartate 96, asparagine 98, and glutamate 105 together coordinate Ca(2+). Lysine 116 is subject to N6,N6,N6-trimethyllysine. Ca(2+)-binding residues include aspartate 130, aspartate 132, aspartate 134, glutamine 136, and glutamate 141.

It belongs to the calmodulin family.

Functionally, calmodulin mediates the control of a large number of enzymes, ion channels and other proteins by Ca(2+). Among the enzymes to be stimulated by the calmodulin-Ca(2+) complex are a number of protein kinases and phosphatases. The chain is Calmodulin (CALM1) from Solanum lycopersicum (Tomato).